Consider the following 798-residue polypeptide: Transferrin receptor protein 2 (798 aa).

The Cytoplasmic portion of the chain corresponds to 1-81 (MEQRWGLLRK…WAAAGRKAAP (81 aa)). The Endocytosis signal motif lies at 23–26 (YRRV). Positions 25-44 (RVEGPQLENLEEEDREEGEE) are disordered. The segment covering 33-44 (NLEEEDREEGEE) has biased composition (acidic residues). Residues 82-102 (YLVLTTLLIFTGAFLLGYVAF) form a helical; Signal-anchor for type II membrane protein membrane-spanning segment. Residues 103 to 798 (RGSCQACGDS…GDVWNIDNNF (696 aa)) lie on the Extracellular side of the membrane. N-linked (GlcNAc...) asparagine glycosylation is found at Asn-235, Asn-334, and Asn-535.

This sequence belongs to the peptidase M28 family. M28B subfamily. Homodimer.

Its subcellular location is the cell membrane. In terms of biological role, mediates cellular uptake of transferrin-bound iron in a non-iron dependent manner. May be involved in iron metabolism, hepatocyte function and erythrocyte differentiation. This is Transferrin receptor protein 2 (Tfr2) from Rattus norvegicus (Rat).